Reading from the N-terminus, the 569-residue chain is CTP synthase (569 aa).

Residues 1–272 (MARPKNVKHI…DSRVLKKLGI (272 aa)) form an amidoligase domain region. Ser-18 is a binding site for CTP. Position 18 (Ser-18) interacts with UTP. Position 19–24 (19–24 (SLGKGI)) interacts with ATP. Tyr-59 contributes to the L-glutamine binding site. Residue Asp-76 participates in ATP binding. Positions 76 and 146 each coordinate Mg(2+). Residues 153–155 (DIE), 193–198 (KTKPTQ), and Lys-229 contribute to the CTP site. UTP-binding positions include 193–198 (KTKPTQ) and Lys-229. A Glutamine amidotransferase type-1 domain is found at 299–543 (TIGICGKYTE…VAAAKDYARG (245 aa)). Gly-363 contacts L-glutamine. The active-site Nucleophile; for glutamine hydrolysis is the Cys-390. L-glutamine-binding positions include 391-394 (LGMQ), Glu-414, and Arg-471. Residues His-516 and Glu-518 contribute to the active site.

This sequence belongs to the CTP synthase family. As to quaternary structure, homotetramer.

The enzyme catalyses UTP + L-glutamine + ATP + H2O = CTP + L-glutamate + ADP + phosphate + 2 H(+). It catalyses the reaction L-glutamine + H2O = L-glutamate + NH4(+). The catalysed reaction is UTP + NH4(+) + ATP = CTP + ADP + phosphate + 2 H(+). It functions in the pathway pyrimidine metabolism; CTP biosynthesis via de novo pathway; CTP from UDP: step 2/2. Its activity is regulated as follows. Allosterically activated by GTP, when glutamine is the substrate; GTP has no effect on the reaction when ammonia is the substrate. The allosteric effector GTP functions by stabilizing the protein conformation that binds the tetrahedral intermediate(s) formed during glutamine hydrolysis. Inhibited by the product CTP, via allosteric rather than competitive inhibition. Catalyzes the ATP-dependent amination of UTP to CTP with either L-glutamine or ammonia as the source of nitrogen. Regulates intracellular CTP levels through interactions with the four ribonucleotide triphosphates. This is CTP synthase from Chlorobium chlorochromatii (strain CaD3).